The chain runs to 216 residues: Glutathione S-transferase 1, isoform B (216 aa).

Residues 1 to 80 (MDFYYLPGSA…YLVEKYGKPC (80 aa)) enclose the GST N-terminal domain. Glutathione-binding positions include S9, 50–52 (HCV), and 64–66 (ESR). Residues 89-210 (DPQKRAIVNQ…RSWAEAARPF (122 aa)) enclose the GST C-terminal domain.

It belongs to the GST superfamily. Theta family. In terms of assembly, homodimer.

It carries out the reaction RX + glutathione = an S-substituted glutathione + a halide anion + H(+). Conjugation of reduced glutathione to a wide number of exogenous and endogenous hydrophobic electrophiles. This is Glutathione S-transferase 1, isoform B from Anopheles gambiae (African malaria mosquito).